The sequence spans 523 residues: L-tyrosine:2-oxoglutarate aminotransferase ucdG (523 aa).

Belongs to the class-I pyridoxal-phosphate-dependent aminotransferase family. Homodimer. Requires pyridoxal 5'-phosphate as cofactor.

It localises to the cytoplasm. The enzyme catalyses L-tyrosine + 2-oxoglutarate = 3-(4-hydroxyphenyl)pyruvate + L-glutamate. Its pathway is secondary metabolite biosynthesis. In terms of biological role, nonribosomal peptide synthetase that mediates the biosynthesis of usterphenyllins and uscandidusins, p-terphenyl derivatives. Within the pathway, ucdG is probably involved in the conversion of L-tyrosine into 4-hydroxyphenylpyruvate (HPPA) as a precursor for the usterphenyllin and uscandidusin biosynthesis. UcdE further prenylates position C-14 of ring C of usterphenyllin B to form usterphenyllin A. The pathway begin with the biosynthesis of 4-hydroxyphenylpyruvate (HPPA) from L-tyrosine, possibly by the aminotransferase ucdG. The nonribosomal peptide synthetase ucdA then condenses two HPPA units to produce atromentin. The key step in this pathway is the reduction and dehydration of atromentin to form a terphenyl triol intermediate, performed by the NAD-dependent dehydrogenase ucdB. Further O-methylation by the methyltransferase ucdC forms terphenyllin carrying two methoxy moieties at C-9 and C-12, and subsequent dihydroxylation at C-3 of ring A and C-15 of ring C by the flavin-dependent oxygenase ucdD leads to 3,15-dihydroxyterphenyllin. Prenylation by ucdE at position C-5 of ring A forms usterphenyllin B, and is followed by a second prenylation at position C-14 of ring C to form usterphenyllin A. The following furan ring formation that leads to uscandidusins A and B was proven to be an unexpected spontaneous non-enzymatic reaction. The chain is L-tyrosine:2-oxoglutarate aminotransferase ucdG from Aspergillus ustus.